Reading from the N-terminus, the 142-residue chain is Small ribosomal subunit protein bS6 (142 aa).

Residues 110-133 are compositionally biased toward basic and acidic residues; the sequence is NKKPSHAKEKHEKTEHTHSHHAEE. The interval 110–142 is disordered; that stretch reads NKKPSHAKEKHEKTEHTHSHHAEEAESVGSHSE.

This sequence belongs to the bacterial ribosomal protein bS6 family.

Functionally, binds together with bS18 to 16S ribosomal RNA. This Helicobacter pylori (strain P12) protein is Small ribosomal subunit protein bS6.